Here is a 437-residue protein sequence, read N- to C-terminus: Serine carboxypeptidase-like 17 (437 aa).

An N-terminal signal peptide occupies residues 1–26 (MGKECYYLSWILKFHLLLVLIQLVDS). Intrachain disulfides connect C85-C327, C249-C263, and C287-C293. N106 is a glycosylation site (N-linked (GlcNAc...) asparagine). S181 is an active-site residue. D362 is a catalytic residue. Residue N378 is glycosylated (N-linked (GlcNAc...) asparagine). H415 is an active-site residue.

Belongs to the peptidase S10 family. Expressed in seedlings and siliques.

The protein localises to the secreted. Its function is as follows. Probable carboxypeptidase. In Arabidopsis thaliana (Mouse-ear cress), this protein is Serine carboxypeptidase-like 17 (SCPL17).